Consider the following 90-residue polypeptide: MKADYKKINSILTYTSTALKNPKIIKDKDLVVLLTIIQEEAKQNRIFYDYKRKFRPAVTRFTIDNNFEIPDCLVKLLSAVETPKAWSGFS.

Its function is as follows. Imparts immunity to sakacin-A to naturally sensitive host strains. In Latilactobacillus sakei (Lactobacillus sakei), this protein is Sakacin-A immunity factor (saiA).